Here is a 119-residue protein sequence, read N- to C-terminus: Ribosome-binding factor A (119 aa).

The protein belongs to the RbfA family. Monomer. Binds 30S ribosomal subunits, but not 50S ribosomal subunits or 70S ribosomes.

The protein localises to the cytoplasm. Its function is as follows. One of several proteins that assist in the late maturation steps of the functional core of the 30S ribosomal subunit. Associates with free 30S ribosomal subunits (but not with 30S subunits that are part of 70S ribosomes or polysomes). Required for efficient processing of 16S rRNA. May interact with the 5'-terminal helix region of 16S rRNA. The sequence is that of Ribosome-binding factor A from Lactococcus lactis subsp. cremoris (strain SK11).